The following is a 323-amino-acid chain: Cyclin-H (323 aa).

Position 5 is a phosphoserine; by CDK8 (S5). Phosphoserine is present on S132. Positions 299–323 are disordered; sequence DDDYVPKKSKHEEEEWTDDDLVESL. Residues 302-311 are compositionally biased toward basic and acidic residues; that stretch reads YVPKKSKHEE. Over residues 312-323 the composition is skewed to acidic residues; sequence EEWTDDDLVESL. T315 carries the phosphothreonine modification. S322 carries the phosphoserine modification.

The protein belongs to the cyclin family. Cyclin C subfamily. Associates primarily with CDK7 and MAT1 to form the CAK complex. CAK can further associate with the core-TFIIH to form the TFIIH basal transcription factor.

It localises to the nucleus. Functionally, regulates CDK7, the catalytic subunit of the CDK-activating kinase (CAK) enzymatic complex. CAK activates the cyclin-associated kinases CDK1, CDK2, CDK4 and CDK6 by threonine phosphorylation. CAK complexed to the core-TFIIH basal transcription factor activates RNA polymerase II by serine phosphorylation of the repetitive C-terminal domain (CTD) of its large subunit (POLR2A), allowing its escape from the promoter and elongation of the transcripts. Involved in cell cycle control and in RNA transcription by RNA polymerase II. Its expression and activity are constant throughout the cell cycle. This is Cyclin-H (CCNH) from Macaca fascicularis (Crab-eating macaque).